Consider the following 360-residue polypeptide: Phospho-N-acetylmuramoyl-pentapeptide-transferase (360 aa).

10 consecutive transmembrane segments (helical) span residues 26–46 (AIVSLLTALFISLWMGPRMIA), 72–92 (PTMGGIMILTAITVSVLLWAY), 94–114 (SNPYVWCVLTVLIGYGIIGFV), 132–152 (WKYFWMSVIALGVAFALYLAG), 168–188 (VMPQLGLLYILLAYFVIVGTG), 199–219 (GLAIMPTVFVAAGFALVAWAT), 236–256 (AGELVIVCTAIVGAGLGFLWF), 263–283 (VFMGDVGSLALGGALGIIAVL), 288–308 (FLLVIMGGVFVVETLSVILQV), and 338–358 (VIVRFWIISLMLVLIGLATLK).

Belongs to the glycosyltransferase 4 family. MraY subfamily. The cofactor is Mg(2+).

It is found in the cell inner membrane. The catalysed reaction is UDP-N-acetyl-alpha-D-muramoyl-L-alanyl-gamma-D-glutamyl-meso-2,6-diaminopimeloyl-D-alanyl-D-alanine + di-trans,octa-cis-undecaprenyl phosphate = di-trans,octa-cis-undecaprenyl diphospho-N-acetyl-alpha-D-muramoyl-L-alanyl-D-glutamyl-meso-2,6-diaminopimeloyl-D-alanyl-D-alanine + UMP. Its pathway is cell wall biogenesis; peptidoglycan biosynthesis. In terms of biological role, catalyzes the initial step of the lipid cycle reactions in the biosynthesis of the cell wall peptidoglycan: transfers peptidoglycan precursor phospho-MurNAc-pentapeptide from UDP-MurNAc-pentapeptide onto the lipid carrier undecaprenyl phosphate, yielding undecaprenyl-pyrophosphoryl-MurNAc-pentapeptide, known as lipid I. This is Phospho-N-acetylmuramoyl-pentapeptide-transferase from Klebsiella pneumoniae (strain 342).